The chain runs to 758 residues: Thiosulfate reductase molybdopterin-containing subunit PhsA (758 aa).

A signal peptide (tat-type signal) is located at residues 1 to 30 (MSISRRSFLQGVGIGCSACALGAFPPGALA). Residues 41 to 97 (TTLTPSLCEMCSFRCPIQAQVVNNKTVFIQGNPSAPQQGTRICARGGSGVSLVNDPQ) enclose the 4Fe-4S Mo/W bis-MGD-type domain. Residues Cys48, Cys51, Cys55, and Cys83 each contribute to the [4Fe-4S] cluster site.

The protein belongs to the prokaryotic molybdopterin-containing oxidoreductase family. In terms of assembly, composed of three subunits: PhsA, PhsB and PhsC. [4Fe-4S] cluster serves as cofactor. Requires Mo-bis(molybdopterin guanine dinucleotide) as cofactor. Post-translationally, predicted to be exported by the Tat system. The position of the signal peptide cleavage has not been experimentally proven.

It is found in the periplasm. It catalyses the reaction a quinone + hydrogen sulfide + sulfite + 2 H(+) = thiosulfate + a quinol. Functionally, component of the PhsABC thiosulfate reductase that catalyzes the reduction of thiosulfate to sulfite and hydrogen sulfide, with menaquinol as the sole electron donor. Proton motive force (PMF) is required to drive transmembrane electron transfer within the reductase. The PhsA subunit contains the active site molybdenum-bis(molybdopterin guanine dinucleotide) (Mo-bis-MGD) cofactor. This chain is Thiosulfate reductase molybdopterin-containing subunit PhsA, found in Salmonella typhimurium (strain LT2 / SGSC1412 / ATCC 700720).